A 1199-amino-acid chain; its full sequence is Tubulin monoglutamylase TTLL4 (1199 aa).

Residues 1-25 show a composition bias toward polar residues; the sequence is MASAGTQHYSIGLRQKNSFKQSGPS. 3 disordered regions span residues 1–43, 472–517, and 525–544; these read MASA…RVWP, IQLG…ELVD, and RDEN…SAVS. The segment covering 477-495 has biased composition (basic and acidic residues); sequence SEKERPEEARELDSSDRDI. Residues 506–517 are compositionally biased toward acidic residues; it reads AETEDTEEELVD. The region spanning 604–947 is the TTL domain; the sequence is RKLLRWKMST…VLPNAEDIIS (344 aa). Serine 691 is subject to Phosphoserine. ATP is bound by residues lysine 721, 727 to 728, 749 to 752, and 762 to 764; these read RG, QRYL, and KFD. An a protein-binding site is contributed by arginine 727. Residue arginine 788 coordinates L-glutamate. ATP is bound at residue 809 to 810; it reads TN. Tyrosine 811, serine 812, and lysine 833 together coordinate L-glutamate. Mg(2+)-binding residues include aspartate 893, glutamate 906, and asparagine 908. The tract at residues 918–1029 is c-MTBD region; it reads PLDISIKGQM…RGQFERIFPS (112 aa). Lysine 924 lines the L-glutamate pocket. Residues 1130–1141 show a composition bias toward polar residues; that stretch reads GTTPKSKKTQAG. The disordered stretch occupies residues 1130-1199; it reads GTTPKSKKTQ…ISDSLLAVSP (70 aa). Over residues 1151–1160 the composition is skewed to basic and acidic residues; the sequence is SSKDSEDTSK. A compositionally biased stretch (polar residues) spans 1164–1192; that stretch reads LSTQTLPVIKCSGQTSRLSASSTFQSISD.

The protein belongs to the tubulin--tyrosine ligase family. It depends on Mg(2+) as a cofactor.

Its subcellular location is the cytoplasm. The protein resides in the cell projection. It is found in the cilium. It localises to the cytoskeleton. The protein localises to the cilium basal body. It carries out the reaction L-glutamyl-[protein] + L-glutamate + ATP = gamma-L-glutamyl-L-glutamyl-[protein] + ADP + phosphate + H(+). Functionally, monoglutamylase which modifies both tubulin and non-tubulin proteins, adding a single glutamate on the gamma-carboxyl group of specific glutamate residues of target proteins. Involved in the side-chain initiation step of the polyglutamylation reaction but not in the elongation step. Preferentially modifies beta-tail tubulin over the alpha-tubulin. Monoglutamylates nucleosome assembly proteins NAP1L1 and NAP1L4. Monoglutamylates nucleotidyltransferase CGAS, leading to inhibition of CGAS catalytic activity, thereby preventing antiviral defense function. Involved in KLF4 glutamylation which impedes its ubiquitination, thereby leading to somatic cell reprogramming, pluripotency maintenance and embryogenesis. The sequence is that of Tubulin monoglutamylase TTLL4 from Homo sapiens (Human).